The sequence spans 218 residues: Large ribosomal subunit protein uL3 (218 aa).

The interval 126-169 (HGFSRGPMTHGSKNHRQPGSIGAGTTPGRIYPGKRMSGRYGGKK) is disordered.

This sequence belongs to the universal ribosomal protein uL3 family. Part of the 50S ribosomal subunit. Forms a cluster with proteins L14 and L19.

Its function is as follows. One of the primary rRNA binding proteins, it binds directly near the 3'-end of the 23S rRNA, where it nucleates assembly of the 50S subunit. In Synechococcus sp. (strain CC9902), this protein is Large ribosomal subunit protein uL3.